A 327-amino-acid polypeptide reads, in one-letter code: Ornithine carbamoyltransferase, mitochondrial (327 aa).

Carbamoyl phosphate-binding positions include 63 to 66 (STRT), Arg114, His141, and Gln144. Positions 172, 236, 240, and 241 each coordinate L-ornithine. Cys276 acts as the Proton acceptor in catalysis. Residues 276 to 277 (CL) and Arg303 contribute to the carbamoyl phosphate site.

This sequence belongs to the aspartate/ornithine carbamoyltransferase superfamily. OTCase family. In terms of assembly, interacts with trx2.

It localises to the mitochondrion matrix. The enzyme catalyses carbamoyl phosphate + L-ornithine = L-citrulline + phosphate + H(+). The protein operates within amino-acid biosynthesis; L-arginine biosynthesis; L-arginine from L-ornithine and carbamoyl phosphate: step 1/3. In terms of biological role, ornithine carbamoyltransferase involved in the synthesis of arginine from glutamate via ornithine and the urea cycle. The polypeptide is Ornithine carbamoyltransferase, mitochondrial (arg3) (Schizosaccharomyces pombe (strain 972 / ATCC 24843) (Fission yeast)).